We begin with the raw amino-acid sequence, 515 residues long: Protein DETOXIFICATION 32 (515 aa).

Over residues 1–26 (METLNVDHEDTISSEQEHRAHTKSDT) the composition is skewed to basic and acidic residues. The disordered stretch occupies residues 1 to 30 (METLNVDHEDTISSEQEHRAHTKSDTDMPP). The next 12 helical transmembrane spans lie at 48–68 (LWWLAGPAIFTSFCQYSLGAV), 90–110 (VISGFSVGIMLGMGSALATLC), 131–151 (IILNSCALLLCLFYVFATPLL), 167–187 (FSLWMIPQLFAYAVNFATAKF), 194–214 (VIAMAVIAATVLLQHTLLSWL), 225–245 (GGAVVLNMSWWLIDVTQIVYI), 276–296 (AVMVCLEVWYFMALILFAGYL), 303–323 (VAALSICMNILGWPIMVAFGF), 347–367 (LIVAMITSVSIGIVISVTLIV), 392–412 (LLALTIVINNIQPVLSGVAVG), 418–438 (IVAYVNIGCYYLCGIPIGLVL), and 448–468 (GIWTGMLTGTVVQTSVLLFII). Residues 488–497 (GDQSNKREEI) are compositionally biased toward basic and acidic residues. The interval 488-515 (GDQSNKREEIDLCEEDENNSNGENNHRK) is disordered. A compositionally biased stretch (low complexity) spans 506-515 (NSNGENNHRK).

Belongs to the multi antimicrobial extrusion (MATE) (TC 2.A.66.1) family.

The protein resides in the membrane. The protein is Protein DETOXIFICATION 32 of Arabidopsis thaliana (Mouse-ear cress).